The primary structure comprises 726 residues: Methyltransferase FGSG_00040 (726 aa).

3 TPR repeats span residues 187-220 (SSDI…GQNV), 224-257 (QLAF…AMPS), and 258-291 (EKSL…YPEN). The SET domain occupies 336–531 (APVEIRESPG…AKTEIFFCYR (196 aa)). Tyr-530 contacts S-adenosyl-L-methionine.

Belongs to the class V-like SAM-binding methyltransferase superfamily.

Its pathway is mycotoxin biosynthesis. Its function is as follows. Methyltransferase; part of the gene cluster that mediates the biosynthesis of gramillins A and B, bicyclic lipopeptides that induce cell death in maize leaves but not in wheat leaves. The nonribosomal peptide synthetase GRA1 incorporates respectively a glutamic adic (Glu), a leucine (Leu), a serine (Ser), a hydroxyglutamine (HOGln), a 2-amino decanoic acid, and 2 cysteins (CysB and CysA). The biosynthesis of 2-amino decanoic acid incorporated in gramillins could be initiated by a fatty acid synthase composed of the alpha and beta subunits FGSG_00036 and FGSG_11656. The cytochrome P450 monooxygenase FGSG_15680 could hydroxylate the fatty acid chain. Subsequent oxidation to the ketone by the oxidoreductase FGSG_00048 and transamination by aminotransferase FGSG_00049 could form 2-amino-decanoic acid. On the other hand, FGSG_15680 could also be responsible for the HO-modified glutamine at the gamma-position. Whether hydroxylation occurs on the fully assembled product or on the Gln residue prior to assembly into the gramillins requires further proof. The thioredoxin FGSG_00043 could also be required for the disulfide-bond formation between CysA and CysB. The specific involvement of the remaining proteins from the cluster is more difficult to discern, but could have broader regulatory (FGSG_00040 and FGSG_11657) or enzymatic functions (FGSG_00044 and FGSG_00045). The final C-domain of GRA1 does not possess the expected sequence of a termination CT domain, often implicated in macrocyclization and release of a cyclopeptidein fungal NRPs; and the thioesterase FGSG_00047 may act in concert with the terminal C-domain of GRA1 to catalyze the formation of the macrocyclic anhydride and release of the products. The protein is Methyltransferase FGSG_00040 of Gibberella zeae (strain ATCC MYA-4620 / CBS 123657 / FGSC 9075 / NRRL 31084 / PH-1) (Wheat head blight fungus).